The following is a 423-amino-acid chain: TNF receptor-associated factor family protein DDB_G0277243 (423 aa).

The RING-type; degenerate zinc finger occupies 20–66 (CSICVDPVLNSLPLEQHQALSCKNGHLLCQACWGKQLALRKECCICK). TRAF-type zinc fingers lie at residues 124–179 (SHLR…NDMP) and 180–237 (THIE…CYLS). The 125-residue stretch at 287–411 (RYKGNWTIEN…DGKLTINIDV (125 aa)) folds into the MATH domain.

It belongs to the TNF receptor-associated factor family. A subfamily.

It is found in the cytoplasm. In terms of biological role, probable adapter protein and signal transducer that links members of the tumor necrosis factor receptor family to different signaling pathways by association with the receptor cytoplasmic domain and kinases. This Dictyostelium discoideum (Social amoeba) protein is TNF receptor-associated factor family protein DDB_G0277243.